The chain runs to 80 residues: Large ribosomal subunit protein uL24 (80 aa).

The tract at residues His-53–Ser-80 is disordered.

This sequence belongs to the universal ribosomal protein uL24 family. As to quaternary structure, part of the 50S ribosomal subunit.

One of two assembly initiator proteins, it binds directly to the 5'-end of the 23S rRNA, where it nucleates assembly of the 50S subunit. Functionally, one of the proteins that surrounds the polypeptide exit tunnel on the outside of the subunit. The chain is Large ribosomal subunit protein uL24 from Chlorobium limicola (strain DSM 245 / NBRC 103803 / 6330).